The primary structure comprises 352 residues: MDAARRGDTQPVMWTTRWLLLLPLLLCEGAQALECYSCVQKADDGCSPHKMKTVKCGPGVDVCTEAVGAVESIHGQFSVAVRGCGSGIPGKNDRGLDLHGLLAFIQLQQCTEDRCNAKLNLTLRGLNPAGNESAYEHNGAECYSCMGLSREKCQGAMPPVVNCYNASGRVYKGCFDGNVTLTAANVTVSLPVRGCVQDEACTRDGVTGPGFTLSGSCCQGPRCNSDLRNKTYFSPRIPPLVLLPPPTTPAPSTRTQNSSSTTSTTAPTTATTTIKPTTVQASHTSSTHETEHEVIQEEGSHLSGGATGHQDRSNMGKFPEKGGAQIPSKGGSDALGSWLSAILLTVVAGAML.

Residues 1–32 form the signal peptide; the sequence is MDAARRGDTQPVMWTTRWLLLLPLLLCEGAQA. Positions 35 to 128 constitute a UPAR/Ly6 1 domain; the sequence is CYSCVQKADD…LNLTLRGLNP (94 aa). 4 N-linked (GlcNAc...) asparagine glycosylation sites follow: Asn-120, Asn-131, Asn-178, and Asn-185. The 83-residue stretch at 142-224 folds into the UPAR/Ly6 2 domain; it reads CYSCMGLSRE…GSCCQGPRCN (83 aa). Positions 236–249 are enriched in pro residues; it reads RIPPLVLLPPPTTP. Residues 236-330 form a disordered region; that stretch reads RIPPLVLLPP…KGGAQIPSKG (95 aa). The span at 250–285 shows a compositional bias: low complexity; the sequence is APSTRTQNSSSTTSTTAPTTATTTIKPTTVQASHTS. Composition is skewed to basic and acidic residues over residues 286–300 and 309–320; these read STHE…EEGS and HQDRSNMGKFPE. The GPI-anchor amidated glycine moiety is linked to residue Gly-330. The propeptide at 331-352 is removed in mature form; it reads GSDALGSWLSAILLTVVAGAML.

Interacts with AGR2 and AGR3. Binds laminin-1 and laminin-5. Interacts with LGALS3. As to expression, found predominantly on the basal layers of squamous epithelium. Expressed in the gravid uterus and on epithelial of the upper gastrointestinal tract. It has been found in tumor lines which metastasize via the lymphatic system.

It localises to the cell membrane. Supports cell migration. May be involved in tumor progression. The sequence is that of Ly6/PLAUR domain-containing protein 3 (Lypd3) from Rattus norvegicus (Rat).